Reading from the N-terminus, the 316-residue chain is MKVLWVAVVVALLAGCQADMEGELGPEEPLTTQQPRGKDSQPWEQALGRFWDYLRWVQTLSDQVQEELLNTQVIQELTALMEETMKEVKAYKEELEGQLGPMAQETQARVSKELQAAQARLGSDMEDLRNRLAQYRSEVQAMLGQSTEELRARMASHLRKLPKRLLRDADDLKKRLAVYQAGASEGAERSLSAIRERFGPLVEQGQSRAATLSTLAGQPLLERAEAWRQKLHGRLEEVGVRAQDRLDKIRQQLEEVHAKVEEQGNQMRLQAEAFQARLRSWFEPLVEDMQRQWAGLVEKVQLALRPSPTSPPSENH.

Positions 1-18 (MKVLWVAVVVALLAGCQA) are cleaved as a signal peptide. O-linked (GalNAc...) threonine glycosylation occurs at T32. Tandem repeats lie at residues 79–100 (ALMEETMKEVKAYKEELEGQLG), 101–122 (PMAQETQARVSKELQAAQARLG), 123–144 (SDMEDLRNRLAQYRSEVQAMLG), 145–166 (QSTEELRARMASHLRKLPKRLL), 167–188 (RDADDLKKRLAVYQAGASEGAE), 189–210 (RSLSAIRERFGPLVEQGQSRAA), 211–232 (TLSTLAGQPLLERAEAWRQKLH), and 233–254 (GRLEEVGVRAQDRLDKIRQQLE). The tract at residues 79 to 254 (ALMEETMKEV…RLDKIRQQLE (176 aa)) is 8 X 22 AA approximate tandem repeats. A Methionine sulfoxide modification is found at M142. The residue at position 146 (S146) is a Phosphoserine. The LDL and other lipoprotein receptors binding stretch occupies residues 157–167 (HLRKLPKRLLR). 161–164 (LPKR) provides a ligand contact to heparin. Residues 209–289 (AATLSTLAGQ…SWFEPLVEDM (81 aa)) form a lipid-binding and lipoprotein association region. The O-linked (GalNAc...) threonine glycan is linked to T211. Position 228–235 (228–235 (RQKLHGRL)) interacts with heparin. The segment at 265-316 (NQMRLQAEAFQARLRSWFEPLVEDMQRQWAGLVEKVQLALRPSPTSPPSENH) is homooligomerization. Positions 277–289 (RLRSWFEPLVEDM) are specificity for association with VLDL. O-linked (GalNAc...) threonine glycosylation is present at T309. O-linked (GalNAc...) serine glycosylation is present at S310.

The protein belongs to the apolipoprotein A1/A4/E family. As to quaternary structure, homotetramer. May interact with ABCA1; functionally associated with ABCA1 in the biogenesis of HDLs. May interact with APP/A4 amyloid-beta peptide; the interaction is extremely stable in vitro but its physiological significance is unclear. May interact with MAPT. May interact with MAP2. In the cerebrospinal fluid, interacts with secreted SORL1. Interacts with PMEL; this allows the loading of PMEL luminal fragment on ILVs to induce fibril nucleation. Post-translationally, APOE exists as multiple glycosylated and sialylated glycoforms within cells and in plasma. The extent of glycosylation and sialylation are tissue and context specific. In terms of processing, glycated in plasma VLDL. Phosphorylated by FAM20C in the extracellular medium.

Its subcellular location is the secreted. The protein resides in the extracellular space. It is found in the extracellular matrix. It localises to the extracellular vesicle. The protein localises to the endosome. Its subcellular location is the multivesicular body. Functionally, APOE is an apolipoprotein, a protein associating with lipid particles, that mainly functions in lipoprotein-mediated lipid transport between organs via the plasma and interstitial fluids. APOE is a core component of plasma lipoproteins and is involved in their production, conversion and clearance. Apolipoproteins are amphipathic molecules that interact both with lipids of the lipoprotein particle core and the aqueous environment of the plasma. As such, APOE associates with chylomicrons, chylomicron remnants, very low density lipoproteins (VLDL) and intermediate density lipoproteins (IDL) but shows a preferential binding to high-density lipoproteins (HDL). It also binds a wide range of cellular receptors including the LDL receptor/LDLR and the very low-density lipoprotein receptor/VLDLR that mediate the cellular uptake of the APOE-containing lipoprotein particles. Finally, APOE also has a heparin-binding activity and binds heparan-sulfate proteoglycans on the surface of cells, a property that supports the capture and the receptor-mediated uptake of APOE-containing lipoproteins by cells. This is Apolipoprotein E (APOE) from Bos taurus (Bovine).